We begin with the raw amino-acid sequence, 225 residues long: Phosphoserine phosphatase (225 aa).

Methionine 1 is subject to N-acetylmethionine. Catalysis depends on aspartate 20, which acts as the Nucleophile. Residues aspartate 20 and aspartate 22 each contribute to the Mg(2+) site. Residue 20-22 coordinates L-serine; it reads DVD. Aspartate 22 (proton donor) is an active-site residue. Position 52 (methionine 52) interacts with O-phospho-L-serine. Glycine 53 provides a ligand contact to phosphate. Residues 109 to 111 and lysine 158 each bind L-serine; that span reads SGG. Residues 109–111 and lysine 158 contribute to the O-phospho-L-serine site; that span reads SGG. Aspartate 179 provides a ligand contact to Mg(2+). Threonine 182 serves as a coordination point for O-phospho-L-serine. Threonine 182 contributes to the phosphate binding site.

Belongs to the HAD-like hydrolase superfamily. SerB family. As to quaternary structure, homodimer. The cofactor is Mg(2+).

The protein localises to the cytoplasm. It localises to the cytosol. The enzyme catalyses O-phospho-L-serine + H2O = L-serine + phosphate. The catalysed reaction is O-phospho-D-serine + H2O = D-serine + phosphate. Its pathway is amino-acid biosynthesis; L-serine biosynthesis; L-serine from 3-phospho-D-glycerate: step 3/3. Its activity is regulated as follows. Inhibited by calcium ions. Catalyzes the last irreversible step in the biosynthesis of L-serine from carbohydrates, the dephosphorylation of O-phospho-L-serine to L-serine. L-serine can then be used in protein synthesis, to produce other amino acids, in nucleotide metabolism or in glutathione synthesis, or can be racemized to D-serine, a neuromodulator. May also act on O-phospho-D-serine. This is Phosphoserine phosphatase from Homo sapiens (Human).